Consider the following 324-residue polypeptide: Myb-like DNA-binding protein myb-1 (324 aa).

2 HTH myb-type domains span residues 4 to 59 (MPDQ…KPGL) and 60 to 110 (NHGP…NRKK). A disordered region spans residues 107–231 (NRKKNQLRRQ…PTGSTLRLLT (125 aa)). The segment covering 155-165 (RRPSSPSSFND) has biased composition (polar residues). Residues 166–175 (SLHHRVHESI) are compositionally biased toward basic and acidic residues. Low complexity-rich tracts occupy residues 183-192 (QQQQQQQQQQ) and 222-231 (PTGSTLRLLT).

It localises to the nucleus. This Neurospora crassa (strain ATCC 24698 / 74-OR23-1A / CBS 708.71 / DSM 1257 / FGSC 987) protein is Myb-like DNA-binding protein myb-1 (rca-1).